The chain runs to 132 residues: uncharacterized protein (132 aa).

The segment at 17-75 (RSAVPRWPHLSSQSGVEPPDRWTGTPGWPSRDQEAPGSMMPPAAAQPSAHGALVPPATA) is disordered. The segment covering 51–65 (APGSMMPPAAAQPSA) has biased composition (low complexity).

In terms of tissue distribution, expressed exclusively in heart.

It localises to the cytoplasm. This is an uncharacterized protein from Homo sapiens (Human).